The chain runs to 125 residues: MNVRINAEEIIRSIEAAQMKPDLPEIRVGDQVRVGVRIQEGGKERVQAFEGTVIAMRHSGINRTITVRKVFQGIGVERVFLIHSPRIESIQVLRRGKVRRAKLFYLRDRVGKATRIKAKAESPDS.

It belongs to the bacterial ribosomal protein bL19 family.

Functionally, this protein is located at the 30S-50S ribosomal subunit interface and may play a role in the structure and function of the aminoacyl-tRNA binding site. The sequence is that of Large ribosomal subunit protein bL19 from Synechococcus sp. (strain JA-2-3B'a(2-13)) (Cyanobacteria bacterium Yellowstone B-Prime).